Reading from the N-terminus, the 142-residue chain is ATP synthase epsilon chain (142 aa).

This sequence belongs to the ATPase epsilon chain family. In terms of assembly, F-type ATPases have 2 components, CF(1) - the catalytic core - and CF(0) - the membrane proton channel. CF(1) has five subunits: alpha(3), beta(3), gamma(1), delta(1), epsilon(1). CF(0) has three main subunits: a, b and c.

Its subcellular location is the cell inner membrane. Its function is as follows. Produces ATP from ADP in the presence of a proton gradient across the membrane. The chain is ATP synthase epsilon chain from Shewanella pealeana (strain ATCC 700345 / ANG-SQ1).